Here is a 137-residue protein sequence, read N- to C-terminus: Nucleoside diphosphate kinase (137 aa).

Positions 10, 59, 87, 93, 104, and 114 each coordinate ATP. His117 functions as the Pros-phosphohistidine intermediate in the catalytic mechanism.

This sequence belongs to the NDK family. As to quaternary structure, homotetramer. Mg(2+) is required as a cofactor.

The protein localises to the cytoplasm. It carries out the reaction a 2'-deoxyribonucleoside 5'-diphosphate + ATP = a 2'-deoxyribonucleoside 5'-triphosphate + ADP. The enzyme catalyses a ribonucleoside 5'-diphosphate + ATP = a ribonucleoside 5'-triphosphate + ADP. Its function is as follows. Major role in the synthesis of nucleoside triphosphates other than ATP. The ATP gamma phosphate is transferred to the NDP beta phosphate via a ping-pong mechanism, using a phosphorylated active-site intermediate. This is Nucleoside diphosphate kinase from Streptomyces avermitilis (strain ATCC 31267 / DSM 46492 / JCM 5070 / NBRC 14893 / NCIMB 12804 / NRRL 8165 / MA-4680).